An 87-amino-acid polypeptide reads, in one-letter code: Small ribosomal subunit protein uS17 (87 aa).

It belongs to the universal ribosomal protein uS17 family. In terms of assembly, part of the 30S ribosomal subunit.

In terms of biological role, one of the primary rRNA binding proteins, it binds specifically to the 5'-end of 16S ribosomal RNA. This chain is Small ribosomal subunit protein uS17, found in Bacillus licheniformis (strain ATCC 14580 / DSM 13 / JCM 2505 / CCUG 7422 / NBRC 12200 / NCIMB 9375 / NCTC 10341 / NRRL NRS-1264 / Gibson 46).